A 319-amino-acid polypeptide reads, in one-letter code: MIIVTGGAGFIGSNIVQGLNARGITDILVVDDLTDGHKCLNLADADIHDYMDKDDFLRRVEANEDFGPVEAIFHEGACSSTTEWDGRFVMAVNYEYTKSLLGWAVARKVPLLYASSASVYGMGPTFRESREFEHPLNMYAYSKFLFDCHLRRFAPGIDSQVVGLRYFNVYGPREQHKGSMASVAYHFHNQLNDSGRLRLFEGADGYGPGEQQRDFIHVDDVVAVNLWLLDNPGVRGIFNVGTGRAQSFNEVAHAALSWHKGSTAGGGIDYIAFPEHLRGRYQSYTQADITALRQAGYEGEFMPVEVGVPRYLEWLALRD.

Residues 10–11 (FI), 31–32 (DD), Lys38, Lys53, and 75–79 (EGACS) each bind NADP(+). Tyr139 serves as the catalytic Proton acceptor. An NADP(+)-binding site is contributed by Lys143. Position 168 (Asn168) interacts with substrate. The NADP(+) site is built by Val169 and Lys177. The active-site Proton acceptor is Lys177. Substrate-binding positions include Ser179, His186, 200-203 (FEGA), Arg213, and Tyr281.

This sequence belongs to the NAD(P)-dependent epimerase/dehydratase family. HldD subfamily. As to quaternary structure, homopentamer. NADP(+) is required as a cofactor.

The enzyme catalyses ADP-D-glycero-beta-D-manno-heptose = ADP-L-glycero-beta-D-manno-heptose. Its pathway is nucleotide-sugar biosynthesis; ADP-L-glycero-beta-D-manno-heptose biosynthesis; ADP-L-glycero-beta-D-manno-heptose from D-glycero-beta-D-manno-heptose 7-phosphate: step 4/4. Its function is as follows. Catalyzes the interconversion between ADP-D-glycero-beta-D-manno-heptose and ADP-L-glycero-beta-D-manno-heptose via an epimerization at carbon 6 of the heptose. In Aromatoleum aromaticum (strain DSM 19018 / LMG 30748 / EbN1) (Azoarcus sp. (strain EbN1)), this protein is ADP-L-glycero-D-manno-heptose-6-epimerase.